The sequence spans 128 residues: 3-aminoacrylate deaminase RutC (128 aa).

The protein belongs to the RutC family.

The catalysed reaction is (Z)-3-aminoacrylate + H2O + H(+) = 3-oxopropanoate + NH4(+). In terms of biological role, involved in pyrimidine catabolism. Catalyzes the deamination of 3-aminoacrylate to malonic semialdehyde, a reaction that can also occur spontaneously. RutC may facilitate the reaction and modulate the metabolic fitness, rather than catalyzing essential functions. The protein is 3-aminoacrylate deaminase RutC of Serratia proteamaculans (strain 568).